A 27-amino-acid chain; its full sequence is Metalloproteinase inhibitor 1 (27 aa).

Residues 1–12 (IEPERQEEEEEE) show a composition bias toward acidic residues. The tract at residues 1-27 (IEPERQEEEEEETRQRVRRGQVRQQQQ) is disordered.

Metalloproteinase inhibitor, active on a globulinase from L.albus seeds, thermolysin and gelatinase B. The protein is Metalloproteinase inhibitor 1 of Lupinus albus (White lupine).